A 1011-amino-acid chain; its full sequence is E3 ubiquitin-protein ligase mib1 (1011 aa).

The 69-residue stretch at 6 to 74 (NNRVMVEGVG…AYDLRIMDSA (69 aa)) folds into the MIB/HERC2 1 domain. Residues 80 to 132 (HDGTMCDTCRQQPIIGIRWKCAECTNYDLCTVCYHGDKHHLRHRFYRITTPGS) form a ZZ-type zinc finger. Zn(2+) is bound by residues Cys-85, Cys-88, Cys-100, Cys-103, Cys-109, Cys-112, His-118, and His-122. The MIB/HERC2 2 domain maps to 143 to 221 (SKKITARGIF…MSDLKCVQDA (79 aa)). ANK repeat units lie at residues 430-460 (DLNE…DVNG), 463-492 (AGHT…DVEA), 496-525 (DGDR…DLNA), 529-558 (RRQT…HPSL), 562-591 (EGDT…DVTI), 595-627 (NGFN…IVDE), 631-661 (DGYT…NLDI), 665-694 (NQQT…KLDI), and 698-729 (DGDT…KVDT). RING-type zinc fingers lie at residues 820-855 (CMVC…LLCK) and 867-902 (CVVC…VQCR). The stretch at 936-963 (QKDKDNTNVNADVQKLQQQLQDIKEQTM) forms a coiled coil. The RING-type 3 zinc-finger motif lies at 964–997 (CPVCLDRLKNMIFMCGHGTCQLCGDRMSECPICR).

The protein localises to the cytoplasm. It is found in the cytoskeleton. The protein resides in the microtubule organizing center. Its subcellular location is the centrosome. It localises to the centriolar satellite. It carries out the reaction S-ubiquitinyl-[E2 ubiquitin-conjugating enzyme]-L-cysteine + [acceptor protein]-L-lysine = [E2 ubiquitin-conjugating enzyme]-L-cysteine + N(6)-ubiquitinyl-[acceptor protein]-L-lysine.. Its pathway is protein modification; protein ubiquitination. In terms of biological role, E3 ubiquitin-protein ligase that mediates ubiquitination of Delta receptors, which act as ligands of Notch proteins. Positively regulates the Delta-mediated Notch signaling by ubiquitinating the intracellular domain of Delta, leading to endocytosis of Delta receptors. The polypeptide is E3 ubiquitin-protein ligase mib1 (mib1) (Xenopus laevis (African clawed frog)).